The following is a 249-amino-acid chain: Triosephosphate isomerase (249 aa).

9-11 contacts substrate; it reads NWK. The active-site Electrophile is His94. The active-site Proton acceptor is the Glu166. Residues Gly172, Ser214, and 235-236 each bind substrate; that span reads GG.

Belongs to the triosephosphate isomerase family. Homodimer.

Its subcellular location is the cytoplasm. It carries out the reaction D-glyceraldehyde 3-phosphate = dihydroxyacetone phosphate. The protein operates within carbohydrate biosynthesis; gluconeogenesis. It functions in the pathway carbohydrate degradation; glycolysis; D-glyceraldehyde 3-phosphate from glycerone phosphate: step 1/1. Its function is as follows. Involved in the gluconeogenesis. Catalyzes stereospecifically the conversion of dihydroxyacetone phosphate (DHAP) to D-glyceraldehyde-3-phosphate (G3P). This chain is Triosephosphate isomerase, found in Leptospira biflexa serovar Patoc (strain Patoc 1 / Ames).